The chain runs to 280 residues: Hydrolase MT0498 (280 aa).

The CN hydrolase domain occupies 1–251; the sequence is MRIALAQIRS…PQLLVADIDV (251 aa). The Proton acceptor role is filled by E40. The Proton donor role is filled by K110. The active-site Nucleophile is the C146.

This sequence belongs to the carbon-nitrogen hydrolase superfamily. NIT1/NIT2 family.

This Mycobacterium tuberculosis (strain CDC 1551 / Oshkosh) protein is Hydrolase MT0498.